A 354-amino-acid chain; its full sequence is Probable cinnamyl alcohol dehydrogenase 1 (354 aa).

Cysteine 47 provides a ligand contact to Zn(2+). Serine 49 serves as a coordination point for NADP(+). Positions 69, 70, 100, 103, 106, 114, and 163 each coordinate Zn(2+). NADP(+)-binding positions include threonine 167, 188–193 (GLGGVG), 211–216 (SSSDKK), threonine 251, glycine 275, and 296–298 (SFI).

This sequence belongs to the zinc-containing alcohol dehydrogenase family. As to quaternary structure, homodimer. Requires Zn(2+) as cofactor.

The catalysed reaction is (E)-cinnamyl alcohol + NADP(+) = (E)-cinnamaldehyde + NADPH + H(+). The enzyme catalyses (E)-coniferol + NADP(+) = (E)-coniferaldehyde + NADPH + H(+). It carries out the reaction (E)-sinapyl alcohol + NADP(+) = (E)-sinapaldehyde + NADPH + H(+). It catalyses the reaction (E)-4-coumaroyl alcohol + NADP(+) = (E)-4-coumaraldehyde + NADPH + H(+). The catalysed reaction is (E)-caffeyl alcohol + NADP(+) = (E)-caffeyl aldehyde + NADPH + H(+). Its pathway is aromatic compound metabolism; phenylpropanoid biosynthesis. Functionally, involved in lignin biosynthesis. Catalyzes the final step specific for the production of lignin monomers. Catalyzes the NADPH-dependent reduction of coniferaldehyde, 5-hydroxyconiferaldehyde, sinapaldehyde, 4-coumaraldehyde and caffeyl aldehyde to their respective alcohols. This is Probable cinnamyl alcohol dehydrogenase 1 (CAD1) from Eucalyptus gunnii (Cider gum).